The sequence spans 194 residues: Dihydrofolate reductase HdrB (194 aa).

In terms of domain architecture, DHFR spans 18 to 194; sequence RFVLVAAVAD…ADRGAEESDE (177 aa). NADP(+) contacts are provided by residues Ala-24 and 30-36; that span reads VIGRDGT. Asp-44 provides a ligand contact to substrate. 62–63 is an NADP(+) binding site; that stretch reads KT. Arg-69 and Arg-78 together coordinate substrate. Residues 84 to 85 and 123 to 130 contribute to the NADP(+) site; these read TT and GGATVYEQ. Position 141 (Thr-141) interacts with substrate. The interval 173–194 is disordered; that stretch reads SFVTYERKQPAAADRGAEESDE.

This sequence belongs to the dihydrofolate reductase family.

It catalyses the reaction (6S)-5,6,7,8-tetrahydrofolate + NADP(+) = 7,8-dihydrofolate + NADPH + H(+). The protein operates within cofactor biosynthesis; tetrahydrofolate biosynthesis; 5,6,7,8-tetrahydrofolate from 7,8-dihydrofolate: step 1/1. Maximum activity at KCl concentration of 0.5 M and activity decreases with increasing concentration of KCl. Functionally, key enzyme in folate metabolism. Catalyzes an essential reaction for de novo glycine and purine synthesis, and for DNA precursor synthesis. The chain is Dihydrofolate reductase HdrB (hdrB) from Haloferax volcanii (Halobacterium volcanii).